The primary structure comprises 57 residues: Small ribosomal subunit protein bS21B (57 aa).

The interval 37–57 (RYEKPSARRKRKAEAARKRRR) is disordered. Residues 43-57 (ARRKRKAEAARKRRR) show a composition bias toward basic residues.

Belongs to the bacterial ribosomal protein bS21 family.

This chain is Small ribosomal subunit protein bS21B, found in Gloeobacter violaceus (strain ATCC 29082 / PCC 7421).